The primary structure comprises 332 residues: DNA-directed RNA polymerase subunit alpha (332 aa).

Residues 1–234 form an alpha N-terminal domain (alpha-NTD) region; sequence MIEYVIPKKL…NHLQIITDSL (234 aa). Positions 264-332 are alpha C-terminal domain (alpha-CTD); that stretch reads AVYSKKIDEL…KFGLSLKKGG (69 aa).

The protein belongs to the RNA polymerase alpha chain family. As to quaternary structure, homodimer. The RNAP catalytic core consists of 2 alpha, 1 beta, 1 beta' and 1 omega subunit. When a sigma factor is associated with the core the holoenzyme is formed, which can initiate transcription.

The catalysed reaction is RNA(n) + a ribonucleoside 5'-triphosphate = RNA(n+1) + diphosphate. Functionally, DNA-dependent RNA polymerase catalyzes the transcription of DNA into RNA using the four ribonucleoside triphosphates as substrates. The polypeptide is DNA-directed RNA polymerase subunit alpha (Pseudothermotoga lettingae (strain ATCC BAA-301 / DSM 14385 / NBRC 107922 / TMO) (Thermotoga lettingae)).